The primary structure comprises 228 residues: Ephrin-A5 (228 aa).

Positions 1-20 are cleaved as a signal peptide; that stretch reads MLHVEMLTLLFLVLWMCVFS. The Ephrin RBD domain occupies 29 to 162; sequence ADRYAVYWNS…KLKVFVRPTN (134 aa). Asparagine 37 carries N-linked (GlcNAc...) asparagine glycosylation. Cystine bridges form between cysteine 62/cysteine 102 and cysteine 90/cysteine 151. The segment at 186-205 is disordered; the sequence is EPADDTVHESAEPSRGENAA. Positions 190 to 200 are enriched in basic and acidic residues; that stretch reads DTVHESAEPSR. Asparagine 203 carries GPI-anchor amidated asparagine lipidation. Residues 204–228 constitute a propeptide, removed in mature form; it reads AAQTPRIPSRLLAILLFLLAMLLTL.

Belongs to the ephrin family. Binds to the receptor tyrosine kinases EPHA2, EPHA3, EPHB1 and EPHB2. Interacts with EPHA8; activates EPHA8. Forms a ternary EFNA5-EPHA3-ADAM10 complex mediating EFNA5 extracellular domain shedding by ADAM10 which regulates the EFNA5-EPHA3 complex internalization and function. Expressed in brain, heart, placenta and lung.

Its subcellular location is the cell membrane. It is found in the membrane. The protein resides in the caveola. Its function is as follows. Cell surface GPI-bound ligand for Eph receptors, a family of receptor tyrosine kinases which are crucial for migration, repulsion and adhesion during neuronal, vascular and epithelial development. Binds promiscuously Eph receptors residing on adjacent cells, leading to contact-dependent bidirectional signaling into neighboring cells. The signaling pathway downstream of the receptor is referred to as forward signaling while the signaling pathway downstream of the ephrin ligand is referred to as reverse signaling. Induces compartmentalized signaling within a caveolae-like membrane microdomain when bound to the extracellular domain of its cognate receptor. This signaling event requires the activity of the Fyn tyrosine kinase. Activates the EPHA3 receptor to regulate cell-cell adhesion and cytoskeletal organization. With the receptor EPHA2 may regulate lens fiber cells shape and interactions and be important for lens transparency maintenance. May function actively to stimulate axon fasciculation. The interaction of EFNA5 with EPHA5 also mediates communication between pancreatic islet cells to regulate glucose-stimulated insulin secretion. Cognate/functional ligand for EPHA7, their interaction regulates brain development modulating cell-cell adhesion and repulsion. In Rattus norvegicus (Rat), this protein is Ephrin-A5 (Efna5).